Consider the following 366-residue polypeptide: Probable S-adenosyl-L-methionine-binding protein AF_0433 (366 aa).

Residues 6–136 form the TsaA-like domain; sequence LRQVGVIRSP…YSSTIDSVGN (131 aa). Residues 23 to 25, 61 to 62, Arg-85, and 116 to 119 contribute to the S-adenosyl-L-methionine site; these read PHQ, DR, and LDGT.

This sequence belongs to the tRNA methyltransferase O family.

The sequence is that of Probable S-adenosyl-L-methionine-binding protein AF_0433 from Archaeoglobus fulgidus (strain ATCC 49558 / DSM 4304 / JCM 9628 / NBRC 100126 / VC-16).